We begin with the raw amino-acid sequence, 155 residues long: Small ribosomal subunit protein uS7 (155 aa).

It belongs to the universal ribosomal protein uS7 family. In terms of assembly, part of the 30S ribosomal subunit. Contacts proteins S9 and S11.

Functionally, one of the primary rRNA binding proteins, it binds directly to 16S rRNA where it nucleates assembly of the head domain of the 30S subunit. Is located at the subunit interface close to the decoding center, probably blocks exit of the E-site tRNA. This chain is Small ribosomal subunit protein uS7, found in Kosmotoga olearia (strain ATCC BAA-1733 / DSM 21960 / TBF 19.5.1).